We begin with the raw amino-acid sequence, 466 residues long: Vimentin (466 aa).

The segment covering 1–13 has biased composition (low complexity); sequence MSTRSVSSSSYRR. The disordered stretch occupies residues 1–31; it reads MSTRSVSSSSYRRMFGGPGTASRPSSTRSYV. N-acetylserine is present on S2. The interval 2–95 is head; it reads STRSVSSSSY…FSLADAINTE (94 aa). S5 bears the Phosphoserine mark. Phosphoserine; by PKA and PKC; alternate is present on S7. The O-linked (GlcNAc) serine; alternate glycan is linked to S7. S8 is subject to Phosphoserine. A phosphoserine; by PKC mark is found at S9 and S10. T20 is modified (phosphothreonine). Residue S25 is modified to Phosphoserine; by PKA and PKC. S26 carries the phosphoserine; by PKC modification. O-linked (GlcNAc) threonine glycosylation occurs at T33. O-linked (GlcNAc) serine; alternate glycosylation occurs at S34. S34 carries the phosphoserine; by PKC; alternate modification. At S39 the chain carries Phosphoserine; by CaMK2, PKA, PKC and ROCK2. S42 carries the phosphoserine; by PKC modification. S49 carries the phosphoserine modification. Y53 is subject to Phosphotyrosine. S55 is subject to Phosphoserine. Position 56 is a phosphoserine; by CDK5 and CDK1 (S56). The residue at position 61 (Y61) is a Phosphotyrosine. Residue S66 is modified to Phosphoserine; by PKA and PKC. S72 bears the Phosphoserine; by AURKB and ROCK2 mark. Residue S83 is modified to Phosphoserine; by CaMK2. The residue at position 87 (S87) is a Phosphoserine. The coil 1A stretch occupies residues 96-131; the sequence is FKNTRTNEKVELQELNDRFANYIDKVRFLEQQNKIL. Residues 96 to 131 are a coiled coil; that stretch reads FKNTRTNEKVELQELNDRFANYIDKVRFLEQQNKIL. The region spanning 103–411 is the IF rod domain; that stretch reads EKVELQELND…KLLEGEESRI (309 aa). A Glycyl lysine isopeptide (Lys-Gly) (interchain with G-Cter in SUMO2) cross-link involves residue K104. Y117 carries the phosphotyrosine modification. N6-acetyllysine; alternate is present on residues K120, K129, and K139. N6-succinyllysine; alternate is present on residues K120 and K129. Glycyl lysine isopeptide (Lys-Gly) (interchain with G-Cter in SUMO2); alternate cross-links involve residues K120, K129, and K139. Positions 132–153 are linker 1; it reads LAELEQLKGQGKSRLGDLYEEE. S144 carries the phosphoserine modification. The stretch at 154–245 forms a coiled coil; it reads MRELRRQVDQ…KLHDEEIQEL (92 aa). The tract at residues 154-245 is coil 1B; that stretch reads MRELRRQVDQ…KLHDEEIQEL (92 aa). K168 is subject to N6-acetyllysine. At K188 the chain carries N6-acetyllysine; alternate. K188 carries the post-translational modification N6-succinyllysine; alternate. S214 carries the post-translational modification Phosphoserine. At K223 the chain carries N6-acetyllysine; alternate. K223 is covalently cross-linked (Glycyl lysine isopeptide (Lys-Gly) (interchain with G-Cter in SUMO2); alternate). The residue at position 226 (S226) is a Phosphoserine. At K235 the chain carries N6-acetyllysine. The linker 12 stretch occupies residues 246 to 268; that stretch reads QAQIQEQHVQIDMDVSKPDLTAA. K262 is covalently cross-linked (Glycyl lysine isopeptide (Lys-Gly) (interchain with G-Cter in SUMO2)). The coil 2 stretch occupies residues 269-407; sequence LRDVRQQYES…ATYRKLLEGE (139 aa). K294 bears the N6-acetyllysine; alternate mark. K294 bears the N6-succinyllysine; alternate mark. A Glycyl lysine isopeptide (Lys-Gly) (interchain with G-Cter in SUMO2); alternate cross-link involves residue K294. Residue S299 is modified to Phosphoserine. Residues 303–407 adopt a coiled-coil conformation; it reads NRNNDALRQA…ATYRKLLEGE (105 aa). A Glycyl lysine isopeptide (Lys-Gly) (interchain with G-Cter in SUMO2) cross-link involves residue K313. A [IL]-x-C-x-x-[DE] motif motif is present at residues 326–329; that stretch reads LTCE. Residue K373 is modified to N6-acetyllysine; alternate. Residue K373 forms a Glycyl lysine isopeptide (Lys-Gly) (interchain with G-Cter in SUMO2); alternate linkage. The interval 408 to 466 is tail; the sequence is ESRISLPLPNFSSLNLRETNLDSLPLVDTHSKRTLLIKTVETRDGQVINETSQHHDDLE. Phosphoserine is present on residues S409, S412, S419, and S420. Position 426 is a phosphothreonine (T426). S430 carries the phosphoserine modification. Position 436 is a phosphothreonine (T436). Residue S438 is modified to Phosphoserine. Residue K439 forms a Glycyl lysine isopeptide (Lys-Gly) (interchain with G-Cter in SUMO2) linkage. K445 is subject to N6-acetyllysine; alternate. K445 bears the N6-succinyllysine; alternate mark. K445 participates in a covalent cross-link: Glycyl lysine isopeptide (Lys-Gly) (interchain with G-Cter in SUMO2); alternate. A Glycyl lysine isopeptide (Lys-Gly) (interchain with G-Cter in SUMO1); alternate cross-link involves residue K445. 2 positions are modified to phosphothreonine: T446 and T458. S459 is subject to Phosphoserine.

It belongs to the intermediate filament family. Homomer assembled from elementary dimers. Identified in complexes that contain VIM, EZR, AHNAK, BFSP1, BFSP2, ANK2, PLEC, PRX and spectrin. Interacts with BCAS3. Interacts with LGSN. Interacts with SYNM. Interacts (via rod region) with PLEC (via CH 1 domain). Interacts with STK33. Interacts with LARP6. Interacts with RAB8B. Interacts with TOR1A; the interaction associates TOR1A with the cytoskeleton. Interacts with TOR1AIP1. Interacts with TOR1AIP1. Interacts with DIAPH1. Interacts with EPPK1; interaction is dependent of higher-order structure of intermediate filament. Interacts with the non-receptor tyrosine kinase SRMS; the interaction leads to phosphorylation of VIM. Interacts with NOD2. Interacts (via head region) with CORO1C. Interacts with HDGF. Interacts with PRKCE (via phorbol-ester/DAG-type 2 domain). Interacts with BFSP2. Interacts with PPL. Interacts with PKP1 and PKP2. Interacts with SCRIB (via PDZ domains); the interaction protects SCRIB from proteasomal degradation and facilitates SCRIB localization to intermediate filaments, the interaction is reduced by cell contact inhibition. One of the most prominent phosphoproteins in various cells of mesenchymal origin. Phosphorylation is enhanced during cell division, at which time vimentin filaments are significantly reorganized. Phosphorylation by PKN1 inhibits the formation of filaments. Filament disassembly during mitosis is promoted by phosphorylation at Ser-55 as well as by nestin. Phosphorylated at Ser-56 by CDK5 during neutrophil secretion in the cytoplasm. Phosphorylated by STK33. Phosphorylated on tyrosine residues by SRMS. Post-translationally, S-nitrosylation is induced by interferon-gamma and oxidatively-modified low-densitity lipoprotein (LDL(ox)) possibly implicating the iNOS-S100A8/9 transnitrosylase complex.

It is found in the cytoplasm. The protein localises to the cytoskeleton. It localises to the nucleus matrix. The protein resides in the cell membrane. Its function is as follows. Vimentins are class-III intermediate filaments found in various non-epithelial cells, especially mesenchymal cells. Vimentin is attached to the nucleus, endoplasmic reticulum, and mitochondria, either laterally or terminally. Plays a role in cell directional movement, orientation, cell sheet organization and Golgi complex polarization at the cell migration front. Protects SCRIB from proteasomal degradation and facilitates its localization to intermediate filaments in a cell contact-mediated manner. Functionally, involved with LARP6 in the stabilization of type I collagen mRNAs for CO1A1 and CO1A2. The polypeptide is Vimentin (VIM) (Bos taurus (Bovine)).